We begin with the raw amino-acid sequence, 7639 residues long: Nonribosomal peptide synthetase 4 (7639 aa).

The adenylation 1 stretch occupies residues 244–636 (WQGAMRPDAE…AGRKDAQIKF (393 aa)). Residues 776–852 (TFSNGTESQL…ALARHVKEIE (77 aa)) enclose the Carrier 1 domain. At Ser-813 the chain carries O-(pantetheine 4'-phosphoryl)serine. The segment at 865-1295 (FELSPIQRLY…EQNLSLLVES (431 aa)) is epimerization 1. A condensation 1 region spans residues 1337-1767 (VEDIYPCSPM…HLGPRHHQQI (431 aa)). An adenylation 2 region spans residues 1786–2181 (FEEQAILRPE…FGRKDTQVKL (396 aa)). The Carrier 2 domain occupies 2313-2389 (APASDMEKQL…DMAQSALPLS (77 aa)). An O-(pantetheine 4'-phosphoryl)serine modification is found at Ser-2350. Positions 2426 to 2852 (VEDIYPCTPL…LISTRDYQSL (427 aa)) are condensation 2. Positions 2878–3269 (QPLDKLAVCA…QGRKDNQVKI (392 aa)) are adenylation 3. One can recognise a Carrier 3 domain in the interval 3403–3479 (REATETETKL…KLASFVQAVE (77 aa)). Ser-3440 carries the O-(pantetheine 4'-phosphoryl)serine modification. The tract at residues 3491–3928 (AFPLSPIQKL…RMTQAKAEPQ (438 aa)) is epimerization 2. The condensation 3 stretch occupies residues 3961–4389 (EAVYPCSPVQ…VSDDCAQQLT (429 aa)). The interval 4407 to 4810 (FERNVQSLPH…VSRKDTQIKL (404 aa)) is adenylation 4. A Carrier 4 domain is found at 4944 to 5020 (APTTMMQRKL…EMATCCGHSE (77 aa)). Ser-4981 is modified (O-(pantetheine 4'-phosphoryl)serine). A condensation 4 region spans residues 5058-5478 (QDLYPCSSLQ…QFCSEEDLQM (421 aa)). Positions 5498-5900 (FWQSVATYHD…IGRKDNQVKL (403 aa)) are adenylation 5. The Carrier 5 domain maps to 6039-6115 (TDTTFVGQLL…DLVTLIEKEG (77 aa)). Ser-6076 carries the O-(pantetheine 4'-phosphoryl)serine modification. An epimerization 3 region spans residues 6133 to 6567 (FALSPIQQLF…EVLGNMAMEL (435 aa)). A condensation 5 region spans residues 6607 to 7032 (VEDMYPCSPM…EALSHLRVSQ (426 aa)). The region spanning 7088–7164 (RDKDQVYNKL…TLLNCLRDKS (77 aa)) is the Carrier 6 domain. Ser-7125 carries the post-translational modification O-(pantetheine 4'-phosphoryl)serine. The condensation 6 stretch occupies residues 7254–7603 (LDGEGPLDVA…SNTEVCFLYR (350 aa)).

The protein belongs to the NRP synthetase family.

It carries out the reaction D-allo-threonine + D-leucine + D-alanine + L-proline + 2 L-leucine + A = fusahexin + AH2 + 6 H2O. The protein operates within secondary metabolite biosynthesis. In terms of biological role, nonribosomal peptide synthetase; part of the gene cluster that mediates the biosynthesis of the fusahexin, a cyclic hydrophobic hexapeptide with the amino acid sequence cyclo-(D-Ala-L-Leu-D-allo-Thr-L-Pro-D-Leu-L-Leu) that plays an important role in cell surface hydrophobicity. Fusahexin might also play a role in virulence, sensitivity to osmotic stress and oxidative stress. NRPS4 is the only enzyme within the cluster and its 5 catalytic modules are sufficient to produce fusahexin. The modules 1 to 4 incorporate respectively D-alanine, L-leucine, D-allo-threonine, and L-proline, which is supported by the presence of epimerase domains in modules 1 and 3, which incorporate D-amino acids. The terminal module is responsible for incorporation of the two adjacent leucine units, where the epimerase domain is only used to convert the first unit to D-leucine. The terminal condensation domain (Ct) is involved in cyclization with D-alanine and thereby releasing of fusahexin. This Gibberella zeae (strain ATCC MYA-4620 / CBS 123657 / FGSC 9075 / NRRL 31084 / PH-1) (Wheat head blight fungus) protein is Nonribosomal peptide synthetase 4.